The primary structure comprises 326 residues: N-acetyl-gamma-glutamyl-phosphate reductase (326 aa).

The active site involves cysteine 155.

The protein belongs to the NAGSA dehydrogenase family. Type 1 subfamily.

The protein localises to the cytoplasm. It catalyses the reaction N-acetyl-L-glutamate 5-semialdehyde + phosphate + NADP(+) = N-acetyl-L-glutamyl 5-phosphate + NADPH + H(+). It participates in amino-acid biosynthesis; L-arginine biosynthesis; N(2)-acetyl-L-ornithine from L-glutamate: step 3/4. Functionally, catalyzes the NADPH-dependent reduction of N-acetyl-5-glutamyl phosphate to yield N-acetyl-L-glutamate 5-semialdehyde. This chain is N-acetyl-gamma-glutamyl-phosphate reductase, found in Shewanella baltica (strain OS195).